The following is a 72-amino-acid chain: Translation initiation factor IF-1 (72 aa).

The S1-like domain maps to 1 to 72 (MAKEETIQMQ…TRARITFRTK (72 aa)).

The protein belongs to the IF-1 family. Component of the 30S ribosomal translation pre-initiation complex which assembles on the 30S ribosome in the order IF-2 and IF-3, IF-1 and N-formylmethionyl-tRNA(fMet); mRNA recruitment can occur at any time during PIC assembly.

It is found in the cytoplasm. Functionally, one of the essential components for the initiation of protein synthesis. Stabilizes the binding of IF-2 and IF-3 on the 30S subunit to which N-formylmethionyl-tRNA(fMet) subsequently binds. Helps modulate mRNA selection, yielding the 30S pre-initiation complex (PIC). Upon addition of the 50S ribosomal subunit IF-1, IF-2 and IF-3 are released leaving the mature 70S translation initiation complex. This is Translation initiation factor IF-1 from Nitrosomonas eutropha (strain DSM 101675 / C91 / Nm57).